Here is a 243-residue protein sequence, read N- to C-terminus: Interleukin-27 subunit alpha (243 aa).

Positions 1–28 (MGQTAGDLGWRLSLLLLPLLLVQAGVWG) are cleaved as a signal peptide.

The protein belongs to the IL-6 superfamily. In terms of assembly, heterodimer with EBI3; not disulfide-linked. This heterodimer is known as interleukin IL-27. O-glycosylated. As to expression, expressed in monocytes and in placenta.

It localises to the secreted. Functionally, associates with EBI3 to form the IL-27 interleukin, a heterodimeric cytokine which functions in innate immunity. IL-27 has pro- and anti-inflammatory properties, that can regulate T-helper cell development, suppress T-cell proliferation, stimulate cytotoxic T-cell activity, induce isotype switching in B-cells, and that has diverse effects on innate immune cells. Among its target cells are CD4 T-helper cells which can differentiate in type 1 effector cells (TH1), type 2 effector cells (TH2) and IL17 producing helper T-cells (TH17). It drives rapid clonal expansion of naive but not memory CD4 T-cells. It also strongly synergizes with IL-12 to trigger interferon-gamma/IFN-gamma production of naive CD4 T-cells, binds to the cytokine receptor WSX-1/TCCR which appears to be required but not sufficient for IL-27-mediated signal transduction. IL-27 potentiate the early phase of TH1 response and suppress TH2 and TH17 differentiation. It induces the differentiation of TH1 cells via two distinct pathways, p38 MAPK/TBX21- and ICAM1/ITGAL/ERK-dependent pathways. It also induces STAT1, STAT3, STAT4 and STAT5 phosphorylation and activates TBX21/T-Bet via STAT1 with resulting IL12RB2 up-regulation, an event crucial to TH1 cell commitment. It suppresses the expression of GATA3, the inhibitor TH1 cells development. In CD8 T-cells, it activates STATs as well as GZMB. IL-27 reveals to be a potent inhibitor of TH17 cell development and of IL-17 production. Indeed IL27 alone is also able to inhibit the production of IL17 by CD4 and CD8 T-cells. While IL-27 suppressed the development of pro-inflammatory Th17 cells via STAT1, it inhibits the development of anti-inflammatory inducible regulatory T-cells, iTreg, independently of STAT1. IL-27 also has an effect on cytokine production, it suppresses pro-inflammatory cytokine production such as IL2, IL4, IL5 and IL6 and activates suppressors of cytokine signaling such as SOCS1 and SOCS3. Apart from suppression of cytokine production, IL-27 also antagonizes the effects of some cytokines such as IL6 through direct effects on T-cells. Another important role of IL-27 is its antitumor activity as well as its antiangiogenic activity with activation of production of antiangiogenic chemokines such as IP-10/CXCL10 and MIG/CXCL9. In vein endothelial cells, it induces IRF1/interferon regulatory factor 1 and increase the expression of MHC class II transactivator/CIITA with resulting up-regulation of major histocompatibility complex class II. IL-27 also demonstrates antiviral activity with inhibitory properties on HIV-1 replication. This chain is Interleukin-27 subunit alpha (IL27), found in Homo sapiens (Human).